Reading from the N-terminus, the 397-residue chain is uncharacterized protein (397 aa).

9 helical membrane passes run 1–21, 39–59, 76–96, 103–123, 124–144, 194–214, 219–239, 255–275, and 301–321; these read MGAS…LMLV, VIQS…VVVF, EALS…FGVP, VLLF…FVGA, ALIE…LVMA, MMTP…LFAF, ALFG…FSLL, LVYL…KLML, and QSLT…FWSA.

Belongs to the TerC family.

Its subcellular location is the cell membrane. This is an uncharacterized protein from Mycobacterium bovis (strain ATCC BAA-935 / AF2122/97).